Reading from the N-terminus, the 551-residue chain is Putative transport protein CGSHiGG_02670 (551 aa).

The next 5 membrane-spanning stretches (helical) occupy residues 4 to 24, 28 to 48, 65 to 85, 95 to 115, and 157 to 177; these read IAITISLLALVAVIGLWIGHW, GVGLGIGGVLFGGIIVAHFTN, FGLILFVYTIGIQVGPGFFSS, AFAILIIVLGSIAVVLVHKIA, and VSYAMAYPFGICGILLAMWLI. RCK C-terminal domains lie at 191 to 275 and 277 to 360; these read RFNA…IIGH and VDAP…VIGN. The next 6 helical transmembrane spans lie at 370 to 390, 402 to 424, 438 to 458, 463 to 483, 492 to 512, and 529 to 549; these read MLPVFIGIGLGVLVGSIPFYI, AGGPLVVALILARIGTIGKLYWF, IVLFLAVVGLKSGGSFFDTLV, LEWMGYGIFITFVPLIIVGTI, YLTICGLLAGSMTDPPALAFA, and VYPLVMFLRIMSPQLLAVLLW.

Belongs to the AAE transporter (TC 2.A.81) family. YidE subfamily.

The protein localises to the cell membrane. In Haemophilus influenzae (strain PittGG), this protein is Putative transport protein CGSHiGG_02670.